Consider the following 92-residue polypeptide: Small ribosomal subunit protein bS20 (92 aa).

It belongs to the bacterial ribosomal protein bS20 family.

In terms of biological role, binds directly to 16S ribosomal RNA. This Thermosipho africanus (strain TCF52B) protein is Small ribosomal subunit protein bS20.